Reading from the N-terminus, the 223-residue chain is Killer cell lectin-like receptor subfamily B member 1A (223 aa).

At M1 to K43 the chain is on the cytoplasmic side. The LCK-binding motif signature appears at C32–P35. A helical; Signal-anchor for type II membrane protein transmembrane segment spans residues L44 to V63. The Extracellular segment spans residues R64–S223. Positions K93–K212 constitute a C-type lectin domain. 3 disulfides stabilise this stretch: C94–C105, C122–C210, and C189–C202.

As to quaternary structure, homodimer; disulfide-linked. Interacts with tyrosine kinase LCK. In terms of tissue distribution, expressed in natural killer cells.

It is found in the membrane. Plays a stimulatory role on natural killer (NK) cell cytotoxicity. This is Killer cell lectin-like receptor subfamily B member 1A (Klrb1a) from Rattus norvegicus (Rat).